A 248-amino-acid chain; its full sequence is Ubiquinone biosynthesis O-methyltransferase (248 aa).

4 residues coordinate S-adenosyl-L-methionine: Arg-41, Gly-72, Asp-93, and Met-136.

This sequence belongs to the methyltransferase superfamily. UbiG/COQ3 family.

The catalysed reaction is a 3-demethylubiquinol + S-adenosyl-L-methionine = a ubiquinol + S-adenosyl-L-homocysteine + H(+). The enzyme catalyses a 3-(all-trans-polyprenyl)benzene-1,2-diol + S-adenosyl-L-methionine = a 2-methoxy-6-(all-trans-polyprenyl)phenol + S-adenosyl-L-homocysteine + H(+). Its pathway is cofactor biosynthesis; ubiquinone biosynthesis. Its function is as follows. O-methyltransferase that catalyzes the 2 O-methylation steps in the ubiquinone biosynthetic pathway. This Bartonella bacilliformis (strain ATCC 35685 / KC583 / Herrer 020/F12,63) protein is Ubiquinone biosynthesis O-methyltransferase.